The chain runs to 313 residues: Minor outer capsid protein P9 (313 aa).

This sequence belongs to the phytoreovirus minor outer capsid protein P9 family.

Its subcellular location is the virion. The protein localises to the host cytoplasm. Its function is as follows. Minor outer capsid protein. In Catharanthus roseus (Madagascar periwinkle), this protein is Minor outer capsid protein P9.